We begin with the raw amino-acid sequence, 187 residues long: Elongation factor P (187 aa).

Belongs to the elongation factor P family.

It localises to the cytoplasm. The protein operates within protein biosynthesis; polypeptide chain elongation. Its function is as follows. Involved in peptide bond synthesis. Stimulates efficient translation and peptide-bond synthesis on native or reconstituted 70S ribosomes in vitro. Probably functions indirectly by altering the affinity of the ribosome for aminoacyl-tRNA, thus increasing their reactivity as acceptors for peptidyl transferase. This is Elongation factor P from Corynebacterium aurimucosum (strain ATCC 700975 / DSM 44827 / CIP 107346 / CN-1) (Corynebacterium nigricans).